Here is a 95-residue protein sequence, read N- to C-terminus: Small ribosomal subunit protein bS6 (95 aa).

This sequence belongs to the bacterial ribosomal protein bS6 family.

In terms of biological role, binds together with bS18 to 16S ribosomal RNA. This chain is Small ribosomal subunit protein bS6, found in Clostridium novyi (strain NT).